Here is a 293-residue protein sequence, read N- to C-terminus: Tumor necrosis factor receptor superfamily member 13B (293 aa).

The Extracellular portion of the chain corresponds to 1–165; it reads MSGLGRSRRG…SADQVALVYS (165 aa). TNFR-Cys repeat units lie at residues 33–67 and 70–104; these read SCPEEQYWDPLLGTCMSCKTICNHQSQRTCAAFCR and SCRKEQGKFYDHLLRDCISCASICGQHPKQCAYFC. Disulfide bonds link Cys-34–Cys-47, Cys-50–Cys-62, Cys-54–Cys-66, Cys-71–Cys-86, Cys-89–Cys-100, and Cys-93–Cys-104. The interval 115–146 is disordered; that stretch reads PPELRRQRSGEVENNSDNSGRYQGLEHRGSEA. Over residues 126 to 135 the composition is skewed to polar residues; it reads VENNSDNSGR. The N-linked (GlcNAc...) asparagine glycan is linked to Asn-128. Residues 166–186 form a helical; Signal-anchor for type III membrane protein membrane-spanning segment; the sequence is TLGLCLCAVLCCFLVAVACFL. The Cytoplasmic portion of the chain corresponds to 187-293; it reads KKRGDPCSCQ…VPAQEGGPGA (107 aa). The disordered stretch occupies residues 192–226; that stretch reads PCSCQPRSRPRQSPAKSSQDHAMEAGSPVSTSPEP.

In terms of assembly, binds TRAF2, TRAF5 and TRAF6. Binds the NH2-terminal domain of CAMLG with its C-terminus. In terms of tissue distribution, highly expressed in spleen, thymus, small intestine and peripheral blood leukocytes. Expressed in resting B-cells and activated T-cells, but not in resting T-cells.

The protein localises to the membrane. Its function is as follows. Receptor for TNFSF13/APRIL and TNFSF13B/TALL1/BAFF/BLYS that binds both ligands with similar high affinity. Mediates calcineurin-dependent activation of NF-AT, as well as activation of NF-kappa-B and AP-1. Involved in the stimulation of B- and T-cell function and the regulation of humoral immunity. This chain is Tumor necrosis factor receptor superfamily member 13B (TNFRSF13B), found in Homo sapiens (Human).